Consider the following 373-residue polypeptide: Flap endonuclease 1 (373 aa).

An N-domain region spans residues 1–105 (MGIKGLNALI…GELEKRLKRR (105 aa)). Residue Asp34 coordinates Mg(2+). 2 residues coordinate DNA: Arg47 and Arg71. Positions 87, 159, 161, 180, and 182 each coordinate Mg(2+). The interval 123–254 (DIAKFERRTV…VTAFKLIKEH (132 aa)) is I-domain. Glu159 serves as a coordination point for DNA. Positions 232 and 234 each coordinate DNA. Asp234 lines the Mg(2+) pocket. The interval 340–348 (TQGRLDKFF) is interaction with PCNA. The disordered stretch occupies residues 347–373 (FFVVKKRPAEEKKGKNTKEEKPKKKRK).

Belongs to the XPG/RAD2 endonuclease family. FEN1 subfamily. Interacts with PCNA. Three molecules of FEN1 bind to one PCNA trimer with each molecule binding to one PCNA monomer. PCNA stimulates the nuclease activity without altering cleavage specificity. Mg(2+) is required as a cofactor. Phosphorylated. Phosphorylation upon DNA damage induces relocalization to the nuclear plasma.

It localises to the nucleus. It is found in the nucleolus. Its subcellular location is the nucleoplasm. The protein resides in the mitochondrion. In terms of biological role, structure-specific nuclease with 5'-flap endonuclease and 5'-3' exonuclease activities involved in DNA replication and repair. During DNA replication, cleaves the 5'-overhanging flap structure that is generated by displacement synthesis when DNA polymerase encounters the 5'-end of a downstream Okazaki fragment. It enters the flap from the 5'-end and then tracks to cleave the flap base, leaving a nick for ligation. Also involved in the long patch base excision repair (LP-BER) pathway, by cleaving within the apurinic/apyrimidinic (AP) site-terminated flap. Acts as a genome stabilization factor that prevents flaps from equilibrating into structures that lead to duplications and deletions. Also possesses 5'-3' exonuclease activity on nicked or gapped double-stranded DNA, and exhibits RNase H activity. Also involved in replication and repair of rDNA and in repairing mitochondrial DNA. The protein is Flap endonuclease 1 of Komagataella phaffii (strain GS115 / ATCC 20864) (Yeast).